A 359-amino-acid chain; its full sequence is N-acetylneuraminate-9-phosphate synthase (359 aa).

N6-acetyllysine occurs at positions 61, 74, and 79. S275 is modified (phosphoserine). K290 bears the N6-acetyllysine mark. One can recognise an AFP-like domain in the interval 294–353 (SVVAKVKIPAGTTLTLDMLTVKVGEPKGYPPEDIFNLAGKKVLVTIEEDDTVMEESVESH).

In terms of tissue distribution, ubiquitous.

It is found in the cytoplasm. It catalyses the reaction aldehydo-N-acetyl-D-mannosamine 6-phosphate + phosphoenolpyruvate + H2O = N-acetylneuraminate 9-phosphate + phosphate. In terms of biological role, catalyzes condensation of phosphoenolpyruvate (PEP) and N-acetylmannosamine 6-phosphate (ManNAc-6-P) to synthesize N-acetylneuraminate-9-phosphate (Neu5Ac-9-P). Neu5Ac-9-P is the phosphorylated forms of sialic acid N-acetylneuraminic acid (Neu5Ac). In contrast with human ortholog, has no detectable activity towards D-mannose 6-phosphate. In Mus musculus (Mouse), this protein is N-acetylneuraminate-9-phosphate synthase.